Here is a 206-residue protein sequence, read N- to C-terminus: MKQLTPRQAEVLALIRSAVQQTGMPPTRAEIASELGFKSANAAEEHLKALARKGVIRMMPGTSRGIQLLTDEPEEDEGLPLIGRVAAGEPILAQQHIETHYQIDGSLFHPRADFLLRVHGMSMKNIGILDGDLLAVHKTTQANNGQVVVARVGDDEVTVKRFERKGHIVQLLPENEELQPIVVDLTQENLSIEGLAVGVIRNGNWL.

A DNA-binding region (H-T-H motif) is located at residues 28 to 48; sequence RAEIASELGFKSANAAEEHLK. Active-site for autocatalytic cleavage activity residues include S122 and K160.

This sequence belongs to the peptidase S24 family. As to quaternary structure, homodimer.

It catalyses the reaction Hydrolysis of Ala-|-Gly bond in repressor LexA.. Its function is as follows. Represses a number of genes involved in the response to DNA damage (SOS response), including recA and lexA. In the presence of single-stranded DNA, RecA interacts with LexA causing an autocatalytic cleavage which disrupts the DNA-binding part of LexA, leading to derepression of the SOS regulon and eventually DNA repair. The sequence is that of LexA repressor from Tolumonas auensis (strain DSM 9187 / NBRC 110442 / TA 4).